The sequence spans 402 residues: uncharacterized protein (402 aa).

The next 11 helical transmembrane spans lie at 12–32 (FWLI…ITSV), 48–68 (GAAG…SPLA), 80–100 (TLWL…TGYT), 101–121 (AALF…NVLL), 134–154 (GIMI…ASGV), 168–188 (QAFL…IPQL), 212–232 (WYVT…IAWF), 248–268 (WMVS…PVLA), 291–311 (GLLA…IGIG), 339–359 (MSQS…GYLF), and 367–387 (MPIV…QGAG).

Belongs to the major facilitator superfamily. Cyanate porter (TC 2.A.1.17) family.

Its subcellular location is the cell membrane. This is an uncharacterized protein from Bacillus subtilis (strain 168).